The sequence spans 304 residues: MPRQAASRLVVGEGEGPPGASGPAATMLRSLLLHSLRLCAQTASCLVLFPRFLGTAFMLWLLDFLCIRKHFLRRRHPDHPEPEVELNSEGEEMPPDDPPICVSDDNRLCTLASLKAVWHGQKLDFFKQAHEGGPAPNSEVVRPDGFQSQRILDYAQGTRPLVLNFGSCTUPPFMARMSAFQRLVTKYQRDVDFLIIYIEEAHPSDGWVTTDSPYVIPQHRSLEDRVSAARVLQQGAPGCALVLDTMANSSSSAYGAYFERLYVIQSGTIMYQGGRGPDGYQVSELRTWLERYDEQLHGTRPHRF.

The interval 1–22 (MPRQAASRLVVGEGEGPPGASG) is disordered. The Cytoplasmic portion of the chain corresponds to 1–44 (MPRQAASRLVVGEGEGPPGASGPAATMLRSLLLHSLRLCAQTAS). A helical; Signal-anchor for type II membrane protein membrane pass occupies residues 45 to 67 (CLVLFPRFLGTAFMLWLLDFLCI). Topologically, residues 68-304 (RKHFLRRRHP…QLHGTRPHRF (237 aa)) are extracellular. Residue U170 is part of the active site. Position 170 (U170) is a non-standard amino acid, selenocysteine.

It belongs to the iodothyronine deiodinase family. As to quaternary structure, monomer. Homodimer. May undergo minor heretodimerization with DIO1 and DIO2.

The protein localises to the cell membrane. It is found in the endosome membrane. The enzyme catalyses 3,3',5'-triiodo-L-thyronine + iodide + A + H(+) = L-thyroxine + AH2. It catalyses the reaction 3,3'-diiodo-L-thyronine + iodide + A + H(+) = 3,3',5-triiodo-L-thyronine + AH2. The catalysed reaction is 3-iodo-L-thyronine + iodide + A + H(+) = 3,5-diiodo-L-thyronine + AH2. It carries out the reaction L-thyronine + iodide + A + H(+) = 3-iodo-L-thyronine + AH2. The enzyme catalyses 3',5'-diiodo-L-thyronine + iodide + A + H(+) = 3,3',5'-triiodo-L-thyronine + AH2. It catalyses the reaction 3'-iodo-L-thyronine + iodide + A + H(+) = 3,3'-diiodo-L-thyronine + AH2. The catalysed reaction is 3,3',5'-triiodothyronamine + iodide + A + H(+) = 3,3',5,5'-tetraiodothyronamine + AH2. It carries out the reaction 3',5'-diiodothyronamine + iodide + A + H(+) = 3,3',5'-triiodothyronamine + AH2. The enzyme catalyses 3,3'-diiodothyronamine + iodide + A + H(+) = 3,3',5-triiodothyronamine + AH2. It catalyses the reaction 3-iodothyronamine + iodide + A + H(+) = 3,5-diiodothyronamine + AH2. The catalysed reaction is 3'-iodothyronamine + iodide + A + H(+) = 3,3'-diiodothyronamine + AH2. It carries out the reaction thyronamine + iodide + A + H(+) = 3-iodothyronamine + AH2. Functionally, plays a crucial role in the metabolism of thyroid hormones (TH) and has specific roles in TH activation and inactivation by deiodination. Catalyzes the deiodination of L-thyroxine (T4) to 3,3',5'-triiodothyronine (rT3), 3,5,3'-triiodothyronine (T3) to 3,3'-diiodothyronine (3,3'-T2), 3,5-diiodothyronine (3,5-T2) to 3-monoiodothyronine (3-T1), rT3 to 3',5'-diiodothyronine (3',5'-T2) and 3,3'-T2 to 3'-monoiodothyronine (3'-T1) via inner-ring deiodination (IRD). Catalyzes the deiodination of 3-T1 to L-thyronine (T0) via outer-ring deiodination (ORD). Catalyzes the tyrosyl ring deiodinations of 3,3',5,5'-tetraiodothyronamine, 3,3',5'-triiodothyronamine, 3,5,3'-triiodothyronamine, 3,5-diiodothyronamine, 3,3'-diiodothyronamine and 3-iodothyronamine. The protein is Thyroxine 5-deiodinase (Dio3) of Mus musculus (Mouse).